Here is a 441-residue protein sequence, read N- to C-terminus: Mitochondrial distribution and morphology protein 12 (441 aa).

An SMP-LTD domain is found at 1–441; sequence MSIDIDWERA…VYPSFWTFLV (441 aa). Positions 180 to 289 are disordered; that stretch reads TPLRAVTRGN…SGTPPRRMRE (110 aa). Composition is skewed to polar residues over residues 226-245 and 253-263; these read SRPS…SVST and SSQTVLANNPG.

Belongs to the MDM12 family. In terms of assembly, component of the ER-mitochondria encounter structure (ERMES) or MDM complex, composed of MMM1, MDM10, MDM12 and MDM34. An MMM1 homodimer associates with one molecule of MDM12 on each side in a pairwise head-to-tail manner, and the SMP-LTD domains of MMM1 and MDM12 generate a continuous hydrophobic tunnel for phospholipid trafficking.

The protein resides in the mitochondrion outer membrane. It localises to the endoplasmic reticulum membrane. In terms of biological role, component of the ERMES/MDM complex, which serves as a molecular tether to connect the endoplasmic reticulum (ER) and mitochondria. Components of this complex are involved in the control of mitochondrial shape and protein biogenesis, and function in nonvesicular lipid trafficking between the ER and mitochondria. MDM12 is required for the interaction of the ER-resident membrane protein MMM1 and the outer mitochondrial membrane-resident beta-barrel protein MDM10. The MDM12-MMM1 subcomplex functions in the major beta-barrel assembly pathway that is responsible for biogenesis of all mitochondrial outer membrane beta-barrel proteins, and acts in a late step after the SAM complex. The MDM10-MDM12-MMM1 subcomplex further acts in the TOM40-specific pathway after the action of the MDM12-MMM1 complex. Essential for establishing and maintaining the structure of mitochondria and maintenance of mtDNA nucleoids. The chain is Mitochondrial distribution and morphology protein 12 from Paracoccidioides brasiliensis (strain Pb18).